The sequence spans 352 residues: Small ribosomal subunit biogenesis GTPase RsgA (352 aa).

A compositionally biased stretch (basic residues) spans Met1–Arg21. A disordered region spans residues Met1–Ala38. Positions Phe116–Phe278 constitute a CP-type G domain. Residues Asn164–Asp167 and Gly218–Ser226 each bind GTP. Positions 302, 307, 309, and 315 each coordinate Zn(2+).

This sequence belongs to the TRAFAC class YlqF/YawG GTPase family. RsgA subfamily. Monomer. Associates with 30S ribosomal subunit, binds 16S rRNA. The cofactor is Zn(2+).

Its subcellular location is the cytoplasm. Its function is as follows. One of several proteins that assist in the late maturation steps of the functional core of the 30S ribosomal subunit. Helps release RbfA from mature subunits. May play a role in the assembly of ribosomal proteins into the subunit. Circularly permuted GTPase that catalyzes slow GTP hydrolysis, GTPase activity is stimulated by the 30S ribosomal subunit. This Hamiltonella defensa subsp. Acyrthosiphon pisum (strain 5AT) protein is Small ribosomal subunit biogenesis GTPase RsgA.